The following is a 554-amino-acid chain: Dihydroxy-acid dehydratase (554 aa).

Asp78 provides a ligand contact to Mg(2+). Residue Cys119 coordinates [2Fe-2S] cluster. Mg(2+) contacts are provided by Asp120 and Lys121. Residue Lys121 is modified to N6-carboxylysine. Position 192 (Cys192) interacts with [2Fe-2S] cluster. A Mg(2+)-binding site is contributed by Glu443. Ser469 serves as the catalytic Proton acceptor.

This sequence belongs to the IlvD/Edd family. Homodimer. [2Fe-2S] cluster serves as cofactor. It depends on Mg(2+) as a cofactor.

It carries out the reaction (2R)-2,3-dihydroxy-3-methylbutanoate = 3-methyl-2-oxobutanoate + H2O. The catalysed reaction is (2R,3R)-2,3-dihydroxy-3-methylpentanoate = (S)-3-methyl-2-oxopentanoate + H2O. It participates in amino-acid biosynthesis; L-isoleucine biosynthesis; L-isoleucine from 2-oxobutanoate: step 3/4. The protein operates within amino-acid biosynthesis; L-valine biosynthesis; L-valine from pyruvate: step 3/4. Functionally, functions in the biosynthesis of branched-chain amino acids. Catalyzes the dehydration of (2R,3R)-2,3-dihydroxy-3-methylpentanoate (2,3-dihydroxy-3-methylvalerate) into 2-oxo-3-methylpentanoate (2-oxo-3-methylvalerate) and of (2R)-2,3-dihydroxy-3-methylbutanoate (2,3-dihydroxyisovalerate) into 2-oxo-3-methylbutanoate (2-oxoisovalerate), the penultimate precursor to L-isoleucine and L-valine, respectively. In Shouchella clausii (strain KSM-K16) (Alkalihalobacillus clausii), this protein is Dihydroxy-acid dehydratase.